We begin with the raw amino-acid sequence, 110 residues long: Neural hemoglobin (110 aa).

Positions 2–110 (VNWAAVVDDF…HAIDDILSHL (109 aa)) constitute a Globin domain. His-70 is a binding site for heme.

Belongs to the globin family. As to quaternary structure, homotetramer. Self-associates in the deoxy state. Seems to dissociate upon oxygenation.

Its function is as follows. Acts as an oxygen store capable of sustaining neuronal activity in an anoxic environment for 5 to 30 minutes. The chain is Neural hemoglobin from Cerebratulus lacteus (Milky ribbon worm).